We begin with the raw amino-acid sequence, 202 residues long: UPF0301 protein ML0028 (202 aa).

Belongs to the UPF0301 (AlgH) family.

This is UPF0301 protein ML0028 from Mycobacterium leprae (strain TN).